Reading from the N-terminus, the 1478-residue chain is GTPase-activating protein and VPS9 domain-containing protein 1 (1478 aa).

Residues 147 to 385 (SYLLQVLRYL…AAFLDVVIGG (239 aa)) form the Ras-GAP domain. A Phosphoserine modification is found at Ser227. Phosphothreonine is present on residues Thr390 and Thr458. Tyr460 carries the post-translational modification Phosphotyrosine. Ser466 is modified (phosphoserine). Thr470 is modified (phosphothreonine). Phosphoserine is present on residues Ser566 and Ser569. Disordered regions lie at residues 574 to 608 (GISE…GSNG), 739 to 820 (ESCS…PPSQ), and 846 to 874 (HYAR…LPNF). The segment covering 578–588 (GPSNRSNSVSS) has biased composition (polar residues). Phosphoserine is present on residues Ser742, Ser746, and Ser757. Positions 758-777 (SRPSTPGLSVVSGISATSED) are enriched in polar residues. Phosphothreonine is present on Thr762. Ser766 is subject to Phosphoserine. The span at 778–789 (IPNKIEDLRSEC) shows a compositional bias: basic and acidic residues. Residues Ser876, Ser902, Ser903, Ser908, Ser914, and Ser966 each carry the phosphoserine modification. Basic and acidic residues predominate over residues 889-902 (QRHSYPERLVRSRS). Disordered stretches follow at residues 889-1023 (QRHS…PRLS) and 1043-1064 (TSPS…DRDL). Composition is skewed to basic and acidic residues over residues 954–975 (DSSR…DRNR) and 997–1008 (EKQEKDKDDLGP). Residues 1012–1023 (STLTDDPSPRLS) are compositionally biased toward polar residues. Residues Ser1019, Ser1046, Ser1096, and Ser1103 each carry the phosphoserine modification. Residues 1338 to 1478 (ILRDQVLHEH…EFIKTIDDRK (141 aa)) form the VPS9 domain.

The protein belongs to the GAPVD1 family. Interacts with TRIP10/CIP4. Interacts with RAB5A. In terms of assembly, (Microbial infection) Interacts with P.falciparum (strain 3D7) CK1. As to expression, expressed in erythrocytes (at protein level).

It localises to the membrane. The protein resides in the endosome. Acts both as a GTPase-activating protein (GAP) and a guanine nucleotide exchange factor (GEF), and participates in various processes such as endocytosis, insulin receptor internalization or LC2A4/GLUT4 trafficking. Acts as a GEF for the Ras-related protein RAB31 by exchanging bound GDP for free GTP, leading to regulate LC2A4/GLUT4 trafficking. In the absence of insulin, it maintains RAB31 in an active state and promotes a futile cycle between LC2A4/GLUT4 storage vesicles and early endosomes, retaining LC2A4/GLUT4 inside the cells. Upon insulin stimulation, it is translocated to the plasma membrane, releasing LC2A4/GLUT4 from intracellular storage vesicles. Also involved in EGFR trafficking and degradation, possibly by promoting EGFR ubiquitination and subsequent degradation by the proteasome. Has GEF activity for Rab5 and GAP activity for Ras. This is GTPase-activating protein and VPS9 domain-containing protein 1 (GAPVD1) from Homo sapiens (Human).